A 140-amino-acid chain; its full sequence is Mitochondrial import receptor subunit TOM22 homolog (140 aa).

Low complexity predominate over residues 1–11 (MAAAAAGPGAP). The tract at residues 1–40 (MAAAAAGPGAPLSADELLPKGDAEKPEEELEEEDDEELDE) is disordered. Over 1-81 (MAAAAAGPGA…AQKMYRFSRA (81 aa)) the chain is Cytoplasmic. S13 carries the phosphoserine modification. Acidic residues predominate over residues 25–40 (KPEEELEEEDDEELDE). Positions 39-48 (DETLSERLWG) are import sequence; necessary for mitochondrion outer membrane localization and integration in the TOM complex. Position 41 is a phosphothreonine (T41). S43 bears the Phosphoserine mark. The tract at residues 81 to 101 (AALWIGTTSFMILVLPVVFET) is TMD; necessary for mitochondrion outer membrane localization and integration in the TOM complex. A helical transmembrane segment spans residues 82-101 (ALWIGTTSFMILVLPVVFET). The Mitochondrial intermembrane portion of the chain corresponds to 102–140 (EKLQMEQQQQLQQRQILLGPNTGLSGGMPGALPSLPGKI). Residues 121-140 (PNTGLSGGMPGALPSLPGKI) are C-tail signal; necessary for mitochondrion outer membrane localization and integration in the TOM complex.

The protein belongs to the Tom22 family. In terms of assembly, forms part of the preprotein translocase complex of the outer mitochondrial membrane (TOM complex) which consists of at least 7 different proteins (TOMM5, TOMM6, TOMM7, TOMM20, TOMM22, TOMM40 and TOMM70). Interacts with PPP2R2B and TOMM40.

The protein localises to the mitochondrion outer membrane. In terms of biological role, central receptor component of the translocase of the outer membrane of mitochondria (TOM complex) responsible for the recognition and translocation of cytosolically synthesized mitochondrial preproteins. Together with the peripheral receptor TOM20 functions as the transit peptide receptor and facilitates the movement of preproteins into the translocation pore. Required for the translocation across the mitochondrial outer membrane of cytochrome P450 monooxygenases. The sequence is that of Mitochondrial import receptor subunit TOM22 homolog (TOMM22) from Bos taurus (Bovine).